Reading from the N-terminus, the 90-residue chain is U7-theraphotoxin-Hhn1l (90 aa).

The N-terminal stretch at 1-19 (MKTAIFTVVLALAVFAVLS) is a signal peptide. Positions 20–50 (FGWEANEKALSEEFTELIHEKEAASETEARE) are excised as a propeptide. 3 disulfides stabilise this stretch: Cys-51-Cys-65, Cys-58-Cys-70, and Cys-64-Cys-81.

It belongs to the neurotoxin 10 (Hwtx-1) family. 13 (Hntx-13) subfamily. In terms of tissue distribution, expressed by the venom gland.

The protein resides in the secreted. Its function is as follows. Ion channel inhibitor. This is U7-theraphotoxin-Hhn1l from Cyriopagopus hainanus (Chinese bird spider).